The following is a 210-amino-acid chain: NAD(P)H-quinone oxidoreductase subunit I (210 aa).

2 4Fe-4S ferredoxin-type domains span residues 54–83 and 94–123; these read GRIH…VDWV and YSYS…VTED. 8 residues coordinate [4Fe-4S] cluster: cysteine 63, cysteine 66, cysteine 69, cysteine 73, cysteine 103, cysteine 106, cysteine 109, and cysteine 113.

Belongs to the complex I 23 kDa subunit family. NDH-1 is composed of at least 11 different subunits. It depends on [4Fe-4S] cluster as a cofactor.

It localises to the cellular thylakoid membrane. The catalysed reaction is a plastoquinone + NADH + (n+1) H(+)(in) = a plastoquinol + NAD(+) + n H(+)(out). It catalyses the reaction a plastoquinone + NADPH + (n+1) H(+)(in) = a plastoquinol + NADP(+) + n H(+)(out). Its function is as follows. NDH-1 shuttles electrons from an unknown electron donor, via FMN and iron-sulfur (Fe-S) centers, to quinones in the respiratory and/or the photosynthetic chain. The immediate electron acceptor for the enzyme in this species is believed to be plastoquinone. Couples the redox reaction to proton translocation, and thus conserves the redox energy in a proton gradient. The polypeptide is NAD(P)H-quinone oxidoreductase subunit I (Synechococcus sp. (strain JA-3-3Ab) (Cyanobacteria bacterium Yellowstone A-Prime)).